Here is a 574-residue protein sequence, read N- to C-terminus: MYND-type zinc finger protein C31F10.10c (574 aa).

2 disordered regions span residues 207–253 (DSGD…QDPR) and 283–307 (MTTP…DEID). 2 stretches are compositionally biased toward polar residues: residues 243-253 (IYSNDSFQDPR) and 283-301 (MTTP…ASET). Residues 482-523 (NLLCNKWEEHSRQFAKCRRCRRTKYCSKECQHQAWPGHSRWC) form an MYND-type; degenerate zinc finger. Residues Cys498, Cys501, His519, and Cys523 each coordinate Zn(2+). The tract at residues 534-574 (KRESSKINSVTESESTASPAASVIPVGTESVTSSTQSDSRL) is disordered. Over residues 542–556 (SVTESESTASPAASV) the composition is skewed to low complexity. The span at 562–574 (ESVTSSTQSDSRL) shows a compositional bias: polar residues.

It belongs to the MUB1/samB family.

It localises to the nucleus. Its subcellular location is the cytoplasm. The protein resides in the cytoskeleton. It is found in the microtubule organizing center. The protein localises to the spindle pole body. This chain is MYND-type zinc finger protein C31F10.10c, found in Schizosaccharomyces pombe (strain 972 / ATCC 24843) (Fission yeast).